A 492-amino-acid chain; its full sequence is MSFVCGISGELTEDPVVSQVSGHIFDRRLIVKFIAENGTDPISHGELSEDQLVSLKSGGTGSAPRNVSGTSIPSLLKMLQDEWDTVMLNSFSLRQQLQIARQELSHSLYQHDAACRVISRLSKELTAAREALSTLKPHTSAKVDDDVSIDESEDQQGLSEAILAKLEEKSKSLTAERKQRGKNLPEGLAKTEELAELKQTASHTGIHSTGTPGITALDIKGNLSLTGGIDKTVVLYDYEKEQVMQTFKGHNKKINAVVLHPDNITAISASADSHIRVWSATDSSSKAIIDVHQAPVTDISLNASGDYILSASDDSYWAFSDIRSGKSLCKVSVEPGSQIAVHSIEFHPDGLIFGTGAADAVVKIWDLKNQTVAAAFPGHTAAVRSIAFSENGYYLATGSEDGEVKLWDLRKLKNLKTFANEEKQPINSLSFDMTGTFLGIGGQKVQVLHVKSWSEVVSLSDHSGPVTGVRFGENARSLVTCSLDKSLRVFSF.

Residues 1–72 (MSFVCGISGE…APRNVSGTSI (72 aa)) form the U-box domain. 6 WD repeats span residues 207 to 246 (HSTGTPGITALDIKGNLSLTGGIDKTVVLYDYEKEQVMQT), 249 to 288 (GHNKKINAVVLHPDNITAISASADSHIRVWSATDSSSKAI), 291 to 330 (VHQAPVTDISLNASGDYILSASDDSYWAFSDIRSGKSLCK), 336 to 375 (GSQIAVHSIEFHPDGLIFGTGAADAVVKIWDLKNQTVAAA), 378 to 417 (GHTAAVRSIAFSENGYYLATGSEDGEVKLWDLRKLKNLKT), and 461 to 491 (DHSGPVTGVRFGENARSLVTCSLDKSLRVFS).

The protein belongs to the WD repeat PRP19 family. Homotetramer. Component of the NTC complex (or PRP19-associated complex) which is associated with the spliceosome.

It localises to the nucleus. The protein localises to the nucleoplasm. It catalyses the reaction S-ubiquitinyl-[E2 ubiquitin-conjugating enzyme]-L-cysteine + [acceptor protein]-L-lysine = [E2 ubiquitin-conjugating enzyme]-L-cysteine + N(6)-ubiquitinyl-[acceptor protein]-L-lysine.. Its pathway is protein modification; protein ubiquitination. Its function is as follows. Probable ubiquitin-protein ligase which is mainly involved pre-mRNA splicing and DNA repair. Core component of the NTC/Nineteen complex which is part of the spliceosome and participates in its assembly, its remodeling and is required for its activity. Together with emb-4, necessary for interaction of rnp-4, a probable exon junction complex component, with mRNAs and spliceosomal snRNAs. Plays a role in nuclear retention of unspliced mRNAs. The protein is Pre-mRNA-processing factor 19 (prp-19) of Caenorhabditis elegans.